We begin with the raw amino-acid sequence, 383 residues long: Carbamoyl phosphate synthase small chain (383 aa).

Residues 1–190 (MPHPSSRQAH…FDQRLKQHPD (190 aa)) are CPSase. Residues S51, G242, and G244 each coordinate L-glutamine. Positions 194 to 381 (RVVAIDFGIK…VALMADRRDV (188 aa)) constitute a Glutamine amidotransferase type-1 domain. Catalysis depends on C271, which acts as the Nucleophile. L-glutamine contacts are provided by L272, Q275, N311, G313, and F314. Active-site residues include H354 and E356.

The protein belongs to the CarA family. As to quaternary structure, composed of two chains; the small (or glutamine) chain promotes the hydrolysis of glutamine to ammonia, which is used by the large (or ammonia) chain to synthesize carbamoyl phosphate. Tetramer of heterodimers (alpha,beta)4.

The enzyme catalyses hydrogencarbonate + L-glutamine + 2 ATP + H2O = carbamoyl phosphate + L-glutamate + 2 ADP + phosphate + 2 H(+). It catalyses the reaction L-glutamine + H2O = L-glutamate + NH4(+). The protein operates within amino-acid biosynthesis; L-arginine biosynthesis; carbamoyl phosphate from bicarbonate: step 1/1. It functions in the pathway pyrimidine metabolism; UMP biosynthesis via de novo pathway; (S)-dihydroorotate from bicarbonate: step 1/3. Small subunit of the glutamine-dependent carbamoyl phosphate synthetase (CPSase). CPSase catalyzes the formation of carbamoyl phosphate from the ammonia moiety of glutamine, carbonate, and phosphate donated by ATP, constituting the first step of 2 biosynthetic pathways, one leading to arginine and/or urea and the other to pyrimidine nucleotides. The small subunit (glutamine amidotransferase) binds and cleaves glutamine to supply the large subunit with the substrate ammonia. This Parasynechococcus marenigrum (strain WH8102) protein is Carbamoyl phosphate synthase small chain.